We begin with the raw amino-acid sequence, 131 residues long: uncharacterized protein (131 aa).

The signal sequence occupies residues 1–26 (MKKIVAAIVVIGLVFIAFFYLYSRSG).

This is an uncharacterized protein from Bacillus subtilis (strain 168).